A 747-amino-acid polypeptide reads, in one-letter code: Sex-specific storage-protein 1 (747 aa).

An N-terminal signal peptide occupies residues 1–15 (MRVLVLLACLAAASA). N-linked (GlcNAc...) asparagine glycosylation is found at N494 and N706.

It belongs to the hemocyanin family. In terms of tissue distribution, fat body.

It is found in the secreted. The protein localises to the extracellular space. Its function is as follows. Larval storage protein (LSP) which may serve as a store of amino acids for synthesis of adult proteins. The chain is Sex-specific storage-protein 1 (SP1) from Bombyx mori (Silk moth).